We begin with the raw amino-acid sequence, 155 residues long: 3-hydroxyacyl-[acyl-carrier-protein] dehydratase FabZ (155 aa).

Residue H61 is part of the active site.

It belongs to the thioester dehydratase family. FabZ subfamily.

Its subcellular location is the cytoplasm. It catalyses the reaction a (3R)-hydroxyacyl-[ACP] = a (2E)-enoyl-[ACP] + H2O. Functionally, involved in unsaturated fatty acids biosynthesis. Catalyzes the dehydration of short chain beta-hydroxyacyl-ACPs and long chain saturated and unsaturated beta-hydroxyacyl-ACPs. This Synechococcus sp. (strain ATCC 27144 / PCC 6301 / SAUG 1402/1) (Anacystis nidulans) protein is 3-hydroxyacyl-[acyl-carrier-protein] dehydratase FabZ.